We begin with the raw amino-acid sequence, 272 residues long: METYAVFGNPIAHSKSPFIHQQFAQQLDIVHPYGRVLAPINNFINTLDAFFAAGGKGANITVPFKEEAFARSDELTERASLAGAVNTLKRLEDGRLLGDNTDGIGLLSDLKRLNFIRPGWRILLIGAGGASRGVLLPLLSLDCAVTITNRTASRAEALAKIFAHTGSVHATDMDKLHGCEFDLIINATSSGIRGEIPAIPASLIHPSLCCYDMFYQKGNTPFLSWCVQQGAKRYADGLGMLVGQAAHAVLLWHGVLPQVEPVIELLQQELLA.

Shikimate contacts are provided by residues 14–16 (SKS) and Thr-61. Residue Lys-65 is the Proton acceptor of the active site. Glu-77 serves as a coordination point for NADP(+). Shikimate is bound by residues Asn-86 and Asp-102. NADP(+) is bound by residues 126 to 130 (GAGGA), 149 to 154 (NRTASR), and Met-213. Tyr-215 serves as a coordination point for shikimate. NADP(+) is bound at residue Gly-237.

This sequence belongs to the shikimate dehydrogenase family. As to quaternary structure, homodimer.

It catalyses the reaction shikimate + NADP(+) = 3-dehydroshikimate + NADPH + H(+). The protein operates within metabolic intermediate biosynthesis; chorismate biosynthesis; chorismate from D-erythrose 4-phosphate and phosphoenolpyruvate: step 4/7. Involved in the biosynthesis of the chorismate, which leads to the biosynthesis of aromatic amino acids. Catalyzes the reversible NADPH linked reduction of 3-dehydroshikimate (DHSA) to yield shikimate (SA). This is Shikimate dehydrogenase (NADP(+)) from Salmonella schwarzengrund (strain CVM19633).